Consider the following 617-residue polypeptide: Proline--tRNA ligase (617 aa).

This sequence belongs to the class-II aminoacyl-tRNA synthetase family. ProS type 1 subfamily. In terms of assembly, homodimer.

It is found in the cytoplasm. The catalysed reaction is tRNA(Pro) + L-proline + ATP = L-prolyl-tRNA(Pro) + AMP + diphosphate. Its function is as follows. Catalyzes the attachment of proline to tRNA(Pro) in a two-step reaction: proline is first activated by ATP to form Pro-AMP and then transferred to the acceptor end of tRNA(Pro). As ProRS can inadvertently accommodate and process non-cognate amino acids such as alanine and cysteine, to avoid such errors it has two additional distinct editing activities against alanine. One activity is designated as 'pretransfer' editing and involves the tRNA(Pro)-independent hydrolysis of activated Ala-AMP. The other activity is designated 'posttransfer' editing and involves deacylation of mischarged Ala-tRNA(Pro). The misacylated Cys-tRNA(Pro) is not edited by ProRS. The chain is Proline--tRNA ligase from Streptococcus agalactiae serotype Ia (strain ATCC 27591 / A909 / CDC SS700).